Here is a 198-residue protein sequence, read N- to C-terminus: FMN-dependent NADH:quinone oxidoreductase 2 (198 aa).

Residue 136 to 139 (SRGG) coordinates FMN.

This sequence belongs to the azoreductase type 1 family. In terms of assembly, homodimer. Requires FMN as cofactor.

The enzyme catalyses 2 a quinone + NADH + H(+) = 2 a 1,4-benzosemiquinone + NAD(+). It catalyses the reaction N,N-dimethyl-1,4-phenylenediamine + anthranilate + 2 NAD(+) = 2-(4-dimethylaminophenyl)diazenylbenzoate + 2 NADH + 2 H(+). Functionally, quinone reductase that provides resistance to thiol-specific stress caused by electrophilic quinones. In terms of biological role, also exhibits azoreductase activity. Catalyzes the reductive cleavage of the azo bond in aromatic azo compounds to the corresponding amines. This chain is FMN-dependent NADH:quinone oxidoreductase 2, found in Clostridium perfringens (strain 13 / Type A).